Here is a 256-residue protein sequence, read N- to C-terminus: Pimeloyl-[acyl-carrier protein] methyl ester esterase (256 aa).

Positions 15 to 242 constitute an AB hydrolase-1 domain; that stretch reads HLVLLHGWGL…AAHAPFISHP (228 aa). Residues Trp-22, 82-83, and 143-147 contribute to the substrate site; these read SL and FLALQ. Ser-82 acts as the Nucleophile in catalysis. Residues Asp-207 and His-235 contribute to the active site. His-235 is a substrate binding site.

Belongs to the AB hydrolase superfamily. Carboxylesterase BioH family. Monomer.

It is found in the cytoplasm. It carries out the reaction 6-carboxyhexanoyl-[ACP] methyl ester + H2O = 6-carboxyhexanoyl-[ACP] + methanol + H(+). It participates in cofactor biosynthesis; biotin biosynthesis. Functionally, the physiological role of BioH is to remove the methyl group introduced by BioC when the pimeloyl moiety is complete. It allows to synthesize pimeloyl-ACP via the fatty acid synthetic pathway through the hydrolysis of the ester bonds of pimeloyl-ACP esters. The polypeptide is Pimeloyl-[acyl-carrier protein] methyl ester esterase (Escherichia coli O139:H28 (strain E24377A / ETEC)).